A 150-amino-acid polypeptide reads, in one-letter code: MKIVLQKVSQASVVVDSKVISSIKHGYMLLVGISIDDSMAEIDKLSKKVLSLRIFEDESRNLWKKNIKEANGEILSVSQFTLMAKTKKGTKPDFHLAQKGHIAKELYEEFLKLLRSDLGEEKVKDGEFGAMMSCSLTNEGPVTIILDSDQ.

Residues glycine 140 to proline 141 carry the Gly-cisPro motif, important for rejection of L-amino acids motif.

The protein belongs to the DTD family. Homodimer.

It localises to the cytoplasm. The enzyme catalyses glycyl-tRNA(Ala) + H2O = tRNA(Ala) + glycine + H(+). It carries out the reaction a D-aminoacyl-tRNA + H2O = a tRNA + a D-alpha-amino acid + H(+). The catalysed reaction is D-tyrosyl-tRNA(Tyr) + H2O = D-tyrosine + tRNA(Tyr). Its function is as follows. An aminoacyl-tRNA editing enzyme that deacylates mischarged D-aminoacyl-tRNAs. Hydrolyzes D-tyrosyl-tRNA(Tyr) into D-tyrosine and free tRNA(Tyr). May also deacylate mischarged D-leucyl-tRNA(Leu). Also deacylates mischarged glycyl-tRNA(Ala), protecting cells against glycine mischarging by AlaRS. Acts via tRNA-based rather than protein-based catalysis; rejects L-amino acids rather than detecting D-amino acids in the active site. By recycling D-aminoacyl-tRNA to D-amino acids and free tRNA molecules, this enzyme counteracts the toxicity associated with the formation of D-aminoacyl-tRNA entities in vivo and helps enforce protein L-homochirality. The chain is D-aminoacyl-tRNA deacylase from Saccharomyces cerevisiae (strain ATCC 204508 / S288c) (Baker's yeast).